Reading from the N-terminus, the 345-residue chain is Anthranilate phosphoribosyltransferase (345 aa).

5-phospho-alpha-D-ribose 1-diphosphate is bound by residues G86, 89-90, T94, 96-99, 114-122, and S126; these read GD, NIST, and KHGGRGVSS. G86 is an anthranilate binding site. Position 98 (S98) interacts with Mg(2+). Residue R172 coordinates anthranilate. Positions 231 and 232 each coordinate Mg(2+).

This sequence belongs to the anthranilate phosphoribosyltransferase family. Homodimer. Mg(2+) is required as a cofactor.

The enzyme catalyses N-(5-phospho-beta-D-ribosyl)anthranilate + diphosphate = 5-phospho-alpha-D-ribose 1-diphosphate + anthranilate. It functions in the pathway amino-acid biosynthesis; L-tryptophan biosynthesis; L-tryptophan from chorismate: step 2/5. Catalyzes the transfer of the phosphoribosyl group of 5-phosphorylribose-1-pyrophosphate (PRPP) to anthranilate to yield N-(5'-phosphoribosyl)-anthranilate (PRA). This is Anthranilate phosphoribosyltransferase from Ralstonia pickettii (strain 12J).